Reading from the N-terminus, the 714-residue chain is Polyribonucleotide nucleotidyltransferase (714 aa).

Residues Asp486 and Asp492 each contribute to the Mg(2+) site. Positions 553 to 612 (PRIITMKINPEKIRDVIGKGGAVIRALTEETGTTIDIEEDGTIKIGCTSAEAGEEAKKRI) constitute a KH domain. The region spanning 622 to 690 (GQVYDGTVLK…DKGRVRLSAK (69 aa)) is the S1 motif domain.

This sequence belongs to the polyribonucleotide nucleotidyltransferase family. Requires Mg(2+) as cofactor.

It localises to the cytoplasm. The catalysed reaction is RNA(n+1) + phosphate = RNA(n) + a ribonucleoside 5'-diphosphate. In terms of biological role, involved in mRNA degradation. Catalyzes the phosphorolysis of single-stranded polyribonucleotides processively in the 3'- to 5'-direction. The chain is Polyribonucleotide nucleotidyltransferase from Methylobacillus flagellatus (strain ATCC 51484 / DSM 6875 / VKM B-1610 / KT).